The chain runs to 511 residues: MVLLAAAVCTKAGKAIVSRQFVEMTRTRIEGLLAAFPKLMNTGKQHTFVETESVRYVYQPMEKLYMVLITTKNSNILEDLETLRLFSRVIPEYCRALEENEISEHCFDLIFAFDEIVALGYRENVNLAQIRTFTEMDSHEEKVFRAVRETQEREAKAEMRRKAKELQQARRDAERQGKKAPGFGGFGSSTVSGGSTTSMITETIIETDKPKVAPAPARPSGPSKALKLGAKGKEVDNFVDKLKSEGENIISSNMGKRTSEATKVHAPPINMESVHMKIEEKITLTCGRDGGLQNMELHGMIMLRISDDKFGRIRLHVENEDKKGVQLQTHPNVDKKLFTAESLIGLKNPEKSFPVNSDVGVLKWRLQTTEESFIPLTINCWPSESGNGCDVNIEYELQEDNLELNDVVITIPLPSGVGAPVIGEIDGEYRHDSRRNTLEWCLPVIDAKNKSGSLEFSIAGQPNDFFPVQVSFISKKNYCNIQVTKVTQVDGNSPVRFSTETTFLVDKYEIL.

Basic and acidic residues predominate over residues 168 to 177; it reads QARRDAERQG. The tract at residues 168–196 is disordered; sequence QARRDAERQGKKAPGFGGFGSSTVSGGST. Residue Ser-223 is modified to Phosphoserine. Residues Lys-233 and Lys-241 each carry the N6-acetyllysine modification. Phosphoserine is present on Ser-244. Residues 271 to 511 form the MHD domain; sequence MESVHMKIEE…TFLVDKYEIL (241 aa). N6-acetyllysine is present on residues Lys-309 and Lys-351. At Ser-493 the chain carries Phosphoserine.

The protein belongs to the adaptor complexes medium subunit family. Delta-COP subfamily. Oligomeric complex that consists of at least the alpha, beta, beta', gamma, delta, epsilon and zeta subunits. In terms of tissue distribution, ubiquitously expressed.

The protein resides in the cytoplasm. It localises to the golgi apparatus membrane. Its subcellular location is the cytoplasmic vesicle. It is found in the COPI-coated vesicle membrane. Functionally, the coatomer is a cytosolic protein complex that binds to dilysine motifs and reversibly associates with Golgi non-clathrin-coated vesicles, which further mediate biosynthetic protein transport from the ER, via the Golgi up to the trans Golgi network. Coatomer complex is required for budding from Golgi membranes, and is essential for the retrograde Golgi-to-ER transport of dilysine-tagged proteins. In mammals, the coatomer can only be recruited by membranes associated to ADP-ribosylation factors (ARFs), which are small GTP-binding proteins; the complex also influences the Golgi structural integrity, as well as the processing, activity, and endocytic recycling of LDL receptors. The sequence is that of Coatomer subunit delta (ARCN1) from Bos taurus (Bovine).